We begin with the raw amino-acid sequence, 426 residues long: Serine--tRNA ligase (426 aa).

Residues 1–15 are compositionally biased toward basic and acidic residues; sequence MIDVKDLSENPDKFR. The segment at 1–20 is disordered; that stretch reads MIDVKDLSENPDKFRASQRA. An L-serine-binding site is contributed by 228 to 230; it reads TSE. ATP contacts are provided by residues 259-261 and Val275; that span reads RRE. Residue Glu282 participates in L-serine binding. ATP is bound at residue 346–349; it reads ELTS. Residue Thr386 coordinates L-serine.

The protein belongs to the class-II aminoacyl-tRNA synthetase family. Type-1 seryl-tRNA synthetase subfamily. In terms of assembly, homodimer. The tRNA molecule binds across the dimer.

The protein localises to the cytoplasm. It catalyses the reaction tRNA(Ser) + L-serine + ATP = L-seryl-tRNA(Ser) + AMP + diphosphate + H(+). The enzyme catalyses tRNA(Sec) + L-serine + ATP = L-seryl-tRNA(Sec) + AMP + diphosphate + H(+). It functions in the pathway aminoacyl-tRNA biosynthesis; selenocysteinyl-tRNA(Sec) biosynthesis; L-seryl-tRNA(Sec) from L-serine and tRNA(Sec): step 1/1. Functionally, catalyzes the attachment of serine to tRNA(Ser). Is also able to aminoacylate tRNA(Sec) with serine, to form the misacylated tRNA L-seryl-tRNA(Sec), which will be further converted into selenocysteinyl-tRNA(Sec). The polypeptide is Serine--tRNA ligase (Paenarthrobacter aurescens (strain TC1)).